We begin with the raw amino-acid sequence, 147 residues long: Lysozyme C-3 (147 aa).

The signal sequence occupies residues 1 to 18 (MKALVILGLLFLSVAVQG). A C-type lysozyme domain is found at 19–147 (KVFERCELAR…VSSYVEGCKL (129 aa)). Cystine bridges form between Cys-24-Cys-145, Cys-48-Cys-133, Cys-83-Cys-99, and Cys-95-Cys-113. Residues Glu-53 and Asp-71 contribute to the active site.

It belongs to the glycosyl hydrolase 22 family. Monomer. In terms of tissue distribution, expressed in stomach.

The protein localises to the secreted. It carries out the reaction Hydrolysis of (1-&gt;4)-beta-linkages between N-acetylmuramic acid and N-acetyl-D-glucosamine residues in a peptidoglycan and between N-acetyl-D-glucosamine residues in chitodextrins.. Lysozymes have primarily a bacteriolytic function; those in tissues and body fluids are associated with the monocyte-macrophage system and enhance the activity of immunoagents. The polypeptide is Lysozyme C-3 (Ovis aries (Sheep)).